Here is a 543-residue protein sequence, read N- to C-terminus: DM7 family protein GG19680 (543 aa).

The span at 415–430 (GETQEMDEAHPTKEES) shows a compositional bias: basic and acidic residues. The interval 415 to 443 (GETQEMDEAHPTKEESKSEEEGEVQSGSQ) is disordered.

This sequence belongs to the DM7 family.

The sequence is that of DM7 family protein GG19680 from Drosophila erecta (Fruit fly).